We begin with the raw amino-acid sequence, 459 residues long: Exodeoxyribonuclease 7 large subunit (459 aa).

It belongs to the XseA family. As to quaternary structure, heterooligomer composed of large and small subunits.

Its subcellular location is the cytoplasm. The enzyme catalyses Exonucleolytic cleavage in either 5'- to 3'- or 3'- to 5'-direction to yield nucleoside 5'-phosphates.. Functionally, bidirectionally degrades single-stranded DNA into large acid-insoluble oligonucleotides, which are then degraded further into small acid-soluble oligonucleotides. This is Exodeoxyribonuclease 7 large subunit from Pseudomonas aeruginosa (strain LESB58).